Consider the following 780-residue polypeptide: Pentatricopeptide repeat-containing protein At1g79540 (780 aa).

17 PPR repeats span residues 91–125 (SRESFGLVIDMLSEDNGCDLYWQTLEELKSGGVSV), 126–160 (DSYCFCVLISAYAKMGMAEKAVESFGRMKEFDCRP), 161–196 (DVFTYNVILRVMMREEVFFMLAFAVYNEMLKCNCSP), 197–231 (NLYTFGILMDGLYKKGRTSDAQKMFDDMTGRGISP), 232–266 (NRVTYTILISGLCQRGSADDARKLFYEMQTSGNYP), 267–301 (DSVAHNALLDGFCKLGRMVEAFELLRLFEKDGFVL), 302–336 (GLRGYSSLIDGLFRARRYTQAFELYANMLKKNIKP), 337–371 (DIILYTILIQGLSKAGKIEDALKLLSSMPSKGISP), 372–406 (DTYCYNAVIKALCGRGLLEEGRSLQLEMSETESFP), 407–441 (DACTHTILICSMCRNGLVREAEEIFTEIEKSGCSP), 442–476 (SVATFNALIDGLCKSGELKEARLLLHKMEVGRPAS), 481–515 (LSHSGNRSFDTMVESGSILKAYRDLAHFADTGSSP), 516–550 (DIVSYNVLINGFCRAGDIDGALKLLNVLQLKGLSP), 551–585 (DSVTYNTLINGLHRVGREEEAFKLFYAKDDFRHSP), 653–687 (TLGPYTIWLIGLCQSGRFHEALMVFSVLREKKILV), 688–722 (TPPSCVKLIHGLCKREQLDAAIEVFLYTLDNNFKL), and 723–758 (MPRVCNYLLSSLLESTEKMEIVSQLTNRMERAGYNV).

This sequence belongs to the PPR family. P subfamily.

The polypeptide is Pentatricopeptide repeat-containing protein At1g79540 (Arabidopsis thaliana (Mouse-ear cress)).